Here is a 286-residue protein sequence, read N- to C-terminus: MKRKGVGFSLPVTVVMLVIGFIYFASVFTFIDRWFSLTSSPGIANAAAFTALALMCIYNYSIAVFRDPGRVPLNYMPDVEDPESPVHEIKRKGGDLRYCQKCSHFKPPRAHHCRVCKRCVLRMDHHCIWINNCVGHTNYKVFFVFVVYAVTACVYSLVLLVGSLTVEPQDEEEEMGSYLRTIYVISAFLLIPLSIALGVLLGWHIYLILQNKTTIEYHEGVRAMWLAEKGGQVYKHPYDIGAYENLTLILGPNILSWLCPTSRHIGSGVRFRTAFDSIPDSSETKH.

Transmembrane regions (helical) follow at residues 11-31 (PVTV…FTFI) and 45-65 (NAAA…IAVF). A DHHC domain is found at 97–147 (RYCQKCSHFKPPRAHHCRVCKRCVLRMDHHCIWINNCVGHTNYKVFFVFVV). Cys-127 functions as the S-palmitoyl cysteine intermediate in the catalytic mechanism. 2 helical membrane-spanning segments follow: residues 141–161 (VFFV…VLLV) and 182–202 (IYVI…VLLG).

It belongs to the DHHC palmitoyltransferase family.

The protein localises to the golgi apparatus membrane. It carries out the reaction L-cysteinyl-[protein] + hexadecanoyl-CoA = S-hexadecanoyl-L-cysteinyl-[protein] + CoA. In terms of biological role, palmitoyl acyltransferase. This chain is Probable protein S-acyltransferase 16 (PAT16), found in Arabidopsis thaliana (Mouse-ear cress).